Here is a 252-residue protein sequence, read N- to C-terminus: Imidazole glycerol phosphate synthase subunit HisF (252 aa).

Residues Asp11 and Asp130 contribute to the active site.

Belongs to the HisA/HisF family. As to quaternary structure, heterodimer of HisH and HisF.

It localises to the cytoplasm. The catalysed reaction is 5-[(5-phospho-1-deoxy-D-ribulos-1-ylimino)methylamino]-1-(5-phospho-beta-D-ribosyl)imidazole-4-carboxamide + L-glutamine = D-erythro-1-(imidazol-4-yl)glycerol 3-phosphate + 5-amino-1-(5-phospho-beta-D-ribosyl)imidazole-4-carboxamide + L-glutamate + H(+). The protein operates within amino-acid biosynthesis; L-histidine biosynthesis; L-histidine from 5-phospho-alpha-D-ribose 1-diphosphate: step 5/9. Functionally, IGPS catalyzes the conversion of PRFAR and glutamine to IGP, AICAR and glutamate. The HisF subunit catalyzes the cyclization activity that produces IGP and AICAR from PRFAR using the ammonia provided by the HisH subunit. This chain is Imidazole glycerol phosphate synthase subunit HisF, found in Geobacillus kaustophilus (strain HTA426).